We begin with the raw amino-acid sequence, 177 residues long: Large ribosomal subunit protein uL6 (177 aa).

Belongs to the universal ribosomal protein uL6 family. Part of the 50S ribosomal subunit.

Its function is as follows. This protein binds to the 23S rRNA, and is important in its secondary structure. It is located near the subunit interface in the base of the L7/L12 stalk, and near the tRNA binding site of the peptidyltransferase center. This Salmonella arizonae (strain ATCC BAA-731 / CDC346-86 / RSK2980) protein is Large ribosomal subunit protein uL6.